A 258-amino-acid polypeptide reads, in one-letter code: Type III pantothenate kinase (258 aa).

ATP is bound at residue 6–13; that stretch reads DVGNTNTV. Substrate is bound by residues Tyr100 and 107–110; that span reads GADR. Residue Asp109 is the Proton acceptor of the active site. Residue Asp129 participates in K(+) binding. Thr132 contributes to the ATP binding site. Thr184 lines the substrate pocket.

Belongs to the type III pantothenate kinase family. In terms of assembly, homodimer. NH4(+) serves as cofactor. K(+) is required as a cofactor.

Its subcellular location is the cytoplasm. It catalyses the reaction (R)-pantothenate + ATP = (R)-4'-phosphopantothenate + ADP + H(+). It functions in the pathway cofactor biosynthesis; coenzyme A biosynthesis; CoA from (R)-pantothenate: step 1/5. Functionally, catalyzes the phosphorylation of pantothenate (Pan), the first step in CoA biosynthesis. The protein is Type III pantothenate kinase of Geobacillus sp. (strain WCH70).